Reading from the N-terminus, the 502-residue chain is NAD(P)H-quinone oxidoreductase chain 4, chloroplastic (502 aa).

A run of 13 helical transmembrane segments spans residues 4 to 24 (YPWL…IPLL), 39 to 59 (LGIC…HFDI), 89 to 109 (IGLT…AWPV), 115 to 132 (LFHS…GLFT), 136 to 156 (ILLF…LLSM), 169 to 189 (FILY…TMGL), 209 to 229 (IALE…KLPI), 244 to 264 (HYST…YGLI), 276 to 296 (SIFA…AASI), 315 to 335 (MGFV…GAIL), 387 to 407 (SLAL…PGIV), 418 to 438 (IIIT…LLSM), and 466 to 486 (IFIS…PNLI).

This sequence belongs to the complex I subunit 4 family.

It is found in the plastid. It localises to the chloroplast thylakoid membrane. The catalysed reaction is a plastoquinone + NADH + (n+1) H(+)(in) = a plastoquinol + NAD(+) + n H(+)(out). It carries out the reaction a plastoquinone + NADPH + (n+1) H(+)(in) = a plastoquinol + NADP(+) + n H(+)(out). In Huperzia lucidula (Shining clubmoss), this protein is NAD(P)H-quinone oxidoreductase chain 4, chloroplastic.